The sequence spans 195 residues: ATP-dependent Clp protease proteolytic subunit (195 aa).

Serine 98 functions as the Nucleophile in the catalytic mechanism. Residue histidine 123 is part of the active site.

The protein belongs to the peptidase S14 family. As to quaternary structure, fourteen ClpP subunits assemble into 2 heptameric rings which stack back to back to give a disk-like structure with a central cavity, resembling the structure of eukaryotic proteasomes.

The protein localises to the cytoplasm. The catalysed reaction is Hydrolysis of proteins to small peptides in the presence of ATP and magnesium. alpha-casein is the usual test substrate. In the absence of ATP, only oligopeptides shorter than five residues are hydrolyzed (such as succinyl-Leu-Tyr-|-NHMec, and Leu-Tyr-Leu-|-Tyr-Trp, in which cleavage of the -Tyr-|-Leu- and -Tyr-|-Trp bonds also occurs).. Its function is as follows. Cleaves peptides in various proteins in a process that requires ATP hydrolysis. Has a chymotrypsin-like activity. Plays a major role in the degradation of misfolded proteins. The sequence is that of ATP-dependent Clp protease proteolytic subunit from Thermoanaerobacter pseudethanolicus (strain ATCC 33223 / 39E) (Clostridium thermohydrosulfuricum).